The primary structure comprises 617 residues: Chaperone protein HscA homolog (617 aa).

Belongs to the heat shock protein 70 family.

Its function is as follows. Chaperone involved in the maturation of iron-sulfur cluster-containing proteins. Has a low intrinsic ATPase activity which is markedly stimulated by HscB. The polypeptide is Chaperone protein HscA homolog (Photobacterium profundum (strain SS9)).